Consider the following 192-residue polypeptide: PTS-dependent dihydroxyacetone kinase, ADP-binding subunit DhaL (192 aa).

The DhaL domain occupies D5 to E189. The Mg(2+) site is built by D29, D34, and D36. ADP is bound by residues H37 to N40, A78 to S79, G115, M124, R161, and D174 to G176.

In terms of assembly, homodimer. The dihydroxyacetone kinase complex is composed of a homodimer of DhaM, a homodimer of DhaK and the subunit DhaL. Mg(2+) serves as cofactor.

It localises to the cytoplasm. It catalyses the reaction dihydroxyacetone + phosphoenolpyruvate = dihydroxyacetone phosphate + pyruvate. It functions in the pathway polyol metabolism; glycerol degradation. In terms of biological role, ADP-binding subunit of the dihydroxyacetone kinase, which is responsible for the phosphoenolpyruvate (PEP)-dependent phosphorylation of dihydroxyacetone. DhaL-ADP is converted to DhaL-ATP via a phosphoryl group transfer from DhaM and transmits it to dihydroxyacetone binds to DhaK. The polypeptide is PTS-dependent dihydroxyacetone kinase, ADP-binding subunit DhaL (Lactococcus lactis subsp. lactis (strain IL1403) (Streptococcus lactis)).